We begin with the raw amino-acid sequence, 53 residues long: Rubredoxin (53 aa).

One can recognise a Rubredoxin-like domain in the interval 1 to 52; sequence MAKWRCKICGYIYDEDEGDPDNGISPGTKFEDLPDDWVCPLCGAPKSEFERI. Cys6, Cys9, Cys39, and Cys42 together coordinate Fe cation.

Belongs to the rubredoxin family. It depends on Fe(3+) as a cofactor.

In terms of biological role, rubredoxin is a small nonheme, iron protein lacking acid-labile sulfide. Its single Fe, chelated to 4 Cys, functions as an electron acceptor and may also stabilize the conformation of the molecule. In Pyrococcus abyssi (strain GE5 / Orsay), this protein is Rubredoxin (rub).